Consider the following 239-residue polypeptide: Protein GrpE (239 aa).

Disordered stretches follow at residues 1–54 (MIEN…ELKN) and 208–239 (SMGPGKQNSQEEVEKDKVEGDIDSEENTSEDV). The segment covering 19–42 (QDNALENVSSAQELTTENNELSSQ) has biased composition (polar residues). The segment covering 43-53 (KTEEINTEELK) has biased composition (basic and acidic residues). Positions 228-239 (DIDSEENTSEDV) are enriched in acidic residues.

The protein belongs to the GrpE family. Homodimer.

It localises to the cytoplasm. In terms of biological role, participates actively in the response to hyperosmotic and heat shock by preventing the aggregation of stress-denatured proteins, in association with DnaK and GrpE. It is the nucleotide exchange factor for DnaK and may function as a thermosensor. Unfolded proteins bind initially to DnaJ; upon interaction with the DnaJ-bound protein, DnaK hydrolyzes its bound ATP, resulting in the formation of a stable complex. GrpE releases ADP from DnaK; ATP binding to DnaK triggers the release of the substrate protein, thus completing the reaction cycle. Several rounds of ATP-dependent interactions between DnaJ, DnaK and GrpE are required for fully efficient folding. This chain is Protein GrpE, found in Prochlorococcus marinus (strain AS9601).